The chain runs to 202 residues: Adapter protein MecA 2 (202 aa).

The protein belongs to the MecA family. Homodimer.

In terms of biological role, enables the recognition and targeting of unfolded and aggregated proteins to the ClpC protease or to other proteins involved in proteolysis. Acts negatively in the development of competence by binding ComK and recruiting it to the ClpCP protease. When overexpressed, inhibits sporulation. Also involved in Spx degradation by ClpC. The sequence is that of Adapter protein MecA 2 (mecA2) from Bacillus anthracis.